A 384-amino-acid chain; its full sequence is Deoxyguanosinetriphosphate triphosphohydrolase-like protein (384 aa).

The interval E12–F39 is disordered. Residues H28 to F39 are compositionally biased toward basic and acidic residues. The HD domain maps to R73–N208.

This sequence belongs to the dGTPase family. Type 2 subfamily.

This is Deoxyguanosinetriphosphate triphosphohydrolase-like protein from Bordetella parapertussis (strain 12822 / ATCC BAA-587 / NCTC 13253).